Here is a 262-residue protein sequence, read N- to C-terminus: 2-keto-4-pentenoate hydratase (262 aa).

The protein belongs to the hydratase/decarboxylase family. MhpD subfamily. It depends on a divalent metal cation as a cofactor.

The catalysed reaction is (S)-4-hydroxy-2-oxopentanoate = (2Z)-2-hydroxypenta-2,4-dienoate + H2O. Its pathway is aromatic compound metabolism; 3-phenylpropanoate degradation. Its function is as follows. Catalyzes the conversion of 2-hydroxypentadienoic acid (enolic form of 2-oxopent-4-enoate) to 4-hydroxy-2-ketopentanoic acid. The sequence is that of 2-keto-4-pentenoate hydratase from Burkholderia vietnamiensis (strain G4 / LMG 22486) (Burkholderia cepacia (strain R1808)).